Reading from the N-terminus, the 261-residue chain is 3-hydroxyacyl-CoA dehydrogenase type-2 (261 aa).

N-acetylalanine is present on Ala2. Residues Ser20, Leu22, and Asp41 each contribute to the NAD(+) site. Lys53 is subject to N6-acetyllysine; alternate. At Lys53 the chain carries N6-succinyllysine; alternate. NAD(+) contacts are provided by Asp64 and Val65. N6-acetyllysine is present on Lys69. Cys91 is a binding site for NAD(+). 2 positions are modified to N6-acetyllysine: Lys99 and Lys105. Ser155 is a binding site for substrate. 4 residues coordinate NAD(+): Tyr168, Lys172, Phe201, and Thr203. Tyr168 functions as the Proton acceptor in the catalytic mechanism. Lys212 is modified (N6-acetyllysine; alternate). The residue at position 212 (Lys212) is an N6-succinyllysine; alternate.

This sequence belongs to the short-chain dehydrogenases/reductases (SDR) family. Homotetramer. Component of mitochondrial ribonuclease P, a complex composed of TRMT10C/MRPP1, HSD17B10/MRPP2 and PRORP/MRPP3. Interacts with TRMT10C/MRPP1; forming the MRPP1-MRPP2 subcomplex of the mitochondrial ribonuclease P complex.

Its subcellular location is the mitochondrion. It localises to the mitochondrion matrix. It is found in the mitochondrion nucleoid. It carries out the reaction a (3S)-3-hydroxyacyl-CoA + NAD(+) = a 3-oxoacyl-CoA + NADH + H(+). The enzyme catalyses (2S,3S)-3-hydroxy-2-methylbutanoyl-CoA + NAD(+) = 2-methyl-3-oxobutanoyl-CoA + NADH + H(+). The catalysed reaction is testosterone + NAD(+) = androst-4-ene-3,17-dione + NADH + H(+). It catalyses the reaction 5alpha-androstane-3alpha,17beta-diol + NAD(+) = 17beta-hydroxy-5alpha-androstan-3-one + NADH + H(+). It carries out the reaction 17beta-estradiol + NAD(+) = estrone + NADH + H(+). The enzyme catalyses cholate + NAD(+) = 3alpha,12alpha-dihydroxy-7-oxo-5beta-cholanate + NADH + H(+). The catalysed reaction is (3S)-3-hydroxybutanoyl-CoA + NAD(+) = acetoacetyl-CoA + NADH + H(+). It catalyses the reaction (3S)-hydroxyoctanoyl-CoA + NAD(+) = 3-oxooctanoyl-CoA + NADH + H(+). It carries out the reaction (3S)-hydroxyhexadecanoyl-CoA + NAD(+) = 3-oxohexadecanoyl-CoA + NADH + H(+). The enzyme catalyses 17beta-hydroxy-5alpha-androstan-3-one + NAD(+) = 5alpha-androstan-3,17-dione + NADH + H(+). The catalysed reaction is 5alpha-pregnan-20beta-ol-3-one + NAD(+) = 5alpha-pregnane-3,20-dione + NADH + H(+). It catalyses the reaction 3alpha-hydroxy-5alpha-pregnan-20-one + NAD(+) = 5alpha-pregnane-3,20-dione + NADH + H(+). It carries out the reaction cortisone + NAD(+) = 17alpha-hydroxypregn-4-en-3,11,20-trione-21-al + NADH + H(+). The enzyme catalyses 11-dehydrocorticosterone + NAD(+) = pregn-4-ene-3,11,20,21-tetraone + NADH + H(+). The catalysed reaction is cortisol + NAD(+) = 11beta,17alpha-dihydroxypregn-4-ene-3,20,21-trione + NADH + H(+). It catalyses the reaction chenodeoxycholate + NAD(+) = 7-oxolithocholate + NADH + H(+). It carries out the reaction ursodeoxycholate + NAD(+) = 7-oxolithocholate + NADH + H(+). The enzyme catalyses 3beta,7beta-dihydroxy-5beta-cholan-24-oate + NAD(+) = 3beta-hydroxy-7-oxo-5beta-cholan-24-oate + NADH + H(+). It participates in amino-acid degradation; L-isoleucine degradation. The protein operates within lipid metabolism; fatty acid beta-oxidation. It functions in the pathway steroid metabolism. Its pathway is lipid metabolism; bile acid biosynthesis. Functionally, mitochondrial dehydrogenase involved in pathways of fatty acid, branched-chain amino acid and steroid metabolism. Acts as (S)-3-hydroxyacyl-CoA dehydrogenase in mitochondrial fatty acid beta-oxidation, a major degradation pathway of fatty acids. Catalyzes the third step in the beta-oxidation cycle, namely the reversible conversion of (S)-3-hydroxyacyl-CoA to 3-ketoacyl-CoA. Preferentially accepts straight medium- and short-chain acyl-CoA substrates with highest efficiency for (3S)-hydroxybutanoyl-CoA. Acts as 3-hydroxy-2-methylbutyryl-CoA dehydrogenase in branched-chain amino acid catabolic pathway. Catalyzes the oxidation of 3-hydroxy-2-methylbutanoyl-CoA into 2-methyl-3-oxobutanoyl-CoA, a step in isoleucine degradation pathway. Has hydroxysteroid dehydrogenase activity toward steroid hormones and bile acids. Catalyzes the oxidation of 3alpha-, 17beta-, 20beta- and 21-hydroxysteroids and 7alpha- and 7beta-hydroxy bile acids. Oxidizes allopregnanolone/brexanolone at the 3alpha-hydroxyl group, which is known to be critical for the activation of gamma-aminobutyric acid receptors (GABAARs) chloride channel. Has phospholipase C-like activity toward cardiolipin and its oxidized species. Likely oxidizes the 2'-hydroxyl in the head group of cardiolipin to form a ketone intermediate that undergoes nucleophilic attack by water and fragments into diacylglycerol, dihydroxyacetone and orthophosphate. Has higher affinity for cardiolipin with oxidized fatty acids and may degrade these species during the oxidative stress response to protect cells from apoptosis. By interacting with intracellular amyloid-beta, it may contribute to the neuronal dysfunction associated with Alzheimer disease (AD). Essential for structural and functional integrity of mitochondria. In terms of biological role, in addition to mitochondrial dehydrogenase activity, moonlights as a component of mitochondrial ribonuclease P, a complex that cleaves tRNA molecules in their 5'-ends. Together with TRMT10C/MRPP1, forms a subcomplex of the mitochondrial ribonuclease P, named MRPP1-MRPP2 subcomplex, which displays functions that are independent of the ribonuclease P activity. The MRPP1-MRPP2 subcomplex catalyzes the formation of N(1)-methylguanine and N(1)-methyladenine at position 9 (m1G9 and m1A9, respectively) in tRNAs; HSD17B10/MRPP2 acting as a non-catalytic subunit. The MRPP1-MRPP2 subcomplex also acts as a tRNA maturation platform: following 5'-end cleavage by the mitochondrial ribonuclease P complex, the MRPP1-MRPP2 subcomplex enhances the efficiency of 3'-processing catalyzed by ELAC2, retains the tRNA product after ELAC2 processing and presents the nascent tRNA to the mitochondrial CCA tRNA nucleotidyltransferase TRNT1 enzyme. Associates with mitochondrial DNA complexes at the nucleoids to initiate RNA processing and ribosome assembly. The sequence is that of 3-hydroxyacyl-CoA dehydrogenase type-2 (HSD17B10) from Bos taurus (Bovine).